Here is a 209-residue protein sequence, read N- to C-terminus: Ribonuclease HII (209 aa).

The 192-residue stretch at 18 to 209 (GLIAGVDEVG…FKPVKALLEG (192 aa)) folds into the RNase H type-2 domain. Positions 24, 25, and 116 each coordinate a divalent metal cation.

It belongs to the RNase HII family. Mn(2+) serves as cofactor. It depends on Mg(2+) as a cofactor.

Its subcellular location is the cytoplasm. It carries out the reaction Endonucleolytic cleavage to 5'-phosphomonoester.. Its function is as follows. Endonuclease that specifically degrades the RNA of RNA-DNA hybrids. This chain is Ribonuclease HII, found in Shewanella putrefaciens (strain CN-32 / ATCC BAA-453).